We begin with the raw amino-acid sequence, 156 residues long: Acyl carrier protein, mitochondrial (156 aa).

A mitochondrion-targeting transit peptide spans 1-68 (MASRVLSAYV…GRVTQLCRQY (68 aa)). Residues 77 to 152 (EGIQDRVLYV…EIVDYIADKK (76 aa)) form the Carrier domain. N6-acetyllysine is present on lysine 88. At serine 112 the chain carries O-(pantetheine 4'-phosphoryl)serine.

This sequence belongs to the acyl carrier protein (ACP) family. In terms of assembly, mammalian complex I is composed of 45 different subunits. Interacts with ETFRF1. Identified in a complex composed of MALSU1, MIEF1 upstream open reading frame protein and NDUFAB1; within the trimeric complex, MIEF1 upstream open reading frame protein functions as a bridging scaffold that interacts with MALSU1 on one side, and with NDUFAB1 on the other side. The complex interacts with the mitochondrial large ribosomal subunit. Interacts with alpha-1-microglobulin chain; this interaction is required for the maintenance of mitochondrial redox homeostasis. Component of the mitochondrial core iron-sulfur cluster (ISC) complex composed of NFS1, LYRM4, NDUFAB1, ISCU, FXN, and FDX2; this complex is a heterohexamer containing two copies of each monomer. Component of the cyteine desulfurase complex composed of NFS1, LYRM4 and NDUFAB1; this complex contributes to the stability and cysteine desulfurase activity of NFS1. Post-translationally, phosphopantetheinylation at Ser-112 is essential for interactions with LYR motif-containing proteins.

Its subcellular location is the mitochondrion. In terms of biological role, carrier of the growing fatty acid chain in fatty acid biosynthesis. Accessory and non-catalytic subunit of the mitochondrial membrane respiratory chain NADH dehydrogenase (Complex I), which functions in the transfer of electrons from NADH to the respiratory chain. Accessory protein, of the core iron-sulfur cluster (ISC) assembly complex, that regulates, in association with LYRM4, the stability and the cysteine desulfurase activity of NFS1 and participates in the [2Fe-2S] clusters assembly on the scaffolding protein ISCU. The core iron-sulfur cluster (ISC) assembly complex is involved in the de novo synthesis of a [2Fe-2S] cluster, the first step of the mitochondrial iron-sulfur protein biogenesis. This process is initiated by the cysteine desulfurase complex (NFS1:LYRM4:NDUFAB1) that produces persulfide which is delivered on the scaffold protein ISCU in a FXN-dependent manner. Then this complex is stabilized by FDX2 which provides reducing equivalents to accomplish the [2Fe-2S] cluster assembly. Finally, the [2Fe-2S] cluster is transferred from ISCU to chaperone proteins, including HSCB, HSPA9 and GLRX5. This Pongo pygmaeus (Bornean orangutan) protein is Acyl carrier protein, mitochondrial.